The following is a 456-amino-acid chain: Probable flavin-containing monoamine oxidase A (456 aa).

C394 carries the post-translational modification S-8alpha-FAD cysteine.

Belongs to the flavin monoamine oxidase family. It depends on FAD as a cofactor.

The catalysed reaction is a secondary aliphatic amine + O2 + H2O = a primary amine + an aldehyde + H2O2. The sequence is that of Probable flavin-containing monoamine oxidase A (maoA) from Dictyostelium discoideum (Social amoeba).